The primary structure comprises 23 residues: Phallacidin proprotein 1 (23 aa).

Pro1 is a propeptide. The segment at residues Ala2–Pro8 is a cross-link (cyclopeptide (Ala-Pro)). The segment at residues Trp3 to Cys7 is a cross-link (2'-cysteinyl-6'-hydroxytryptophan sulfoxide (Trp-Cys)). A propeptide spanning residues Cys9 to Lys23 is cleaved from the precursor.

It belongs to the MSDIN fungal toxin family. Post-translationally, processed by the macrocyclase-peptidase enzyme POPB to yield a toxic cyclic heptapeptide. POPB first removes 10 residues from the N-terminus. Conformational trapping of the remaining peptide forces the enzyme to release this intermediate rather than proceed to macrocyclization. The enzyme rebinds the remaining peptide in a different conformation and catalyzes macrocyclization of the N-terminal 7 residues.

Its function is as follows. Major toxin that belongs to the bicyclic heptapeptides called phallotoxins. Although structurally related to amatoxins, phallotoxins have a different mode of action, which is the stabilization of F-actin. Phallotoxins are poisonous when administered parenterally, but not orally because of poor absorption. This Amanita phalloides (Death cap) protein is Phallacidin proprotein 1.